The following is a 274-amino-acid chain: Large ribosomal subunit protein uL2 (274 aa).

Disordered regions lie at residues 21 to 59 and 224 to 274; these read KVGLSKDEPEKSLTSGKKSSGGRNNHGRITTRHRGGGHK and AMNP…QLKG. Residues 32–42 are compositionally biased toward low complexity; that stretch reads SLTSGKKSSGG. Residues 45-59 are compositionally biased toward basic residues; the sequence is NHGRITTRHRGGGHK. Positions 263–274 are enriched in basic and acidic residues; that stretch reads KSSDKYIKQLKG.

The protein belongs to the universal ribosomal protein uL2 family. As to quaternary structure, part of the 50S ribosomal subunit. Forms a bridge to the 30S subunit in the 70S ribosome.

In terms of biological role, one of the primary rRNA binding proteins. Required for association of the 30S and 50S subunits to form the 70S ribosome, for tRNA binding and peptide bond formation. It has been suggested to have peptidyltransferase activity; this is somewhat controversial. Makes several contacts with the 16S rRNA in the 70S ribosome. The protein is Large ribosomal subunit protein uL2 of Wolbachia pipientis wMel.